Consider the following 504-residue polypeptide: ATP synthase subunit alpha, chloroplastic (504 aa).

ATP is bound at residue 170–177; that stretch reads GDRQTGKT.

This sequence belongs to the ATPase alpha/beta chains family. In terms of assembly, F-type ATPases have 2 components, CF(1) - the catalytic core - and CF(0) - the membrane proton channel. CF(1) has five subunits: alpha(3), beta(3), gamma(1), delta(1), epsilon(1). CF(0) has four main subunits: a, b, b' and c.

The protein localises to the plastid. Its subcellular location is the chloroplast thylakoid membrane. It catalyses the reaction ATP + H2O + 4 H(+)(in) = ADP + phosphate + 5 H(+)(out). In terms of biological role, produces ATP from ADP in the presence of a proton gradient across the membrane. The alpha chain is a regulatory subunit. The polypeptide is ATP synthase subunit alpha, chloroplastic (Ostreococcus tauri).